Reading from the N-terminus, the 398-residue chain is Immunoglobulin heavy constant gamma 2A (398 aa).

Ig-like domains follow at residues 5–97 (PSVY…KKIE), 120–219 (PSVF…RTIS), and 228–324 (PQVY…KSFS). 3 cysteine pairs are disulfide-bonded: C26-C81, C143-C203, and C249-C307. N179 carries an N-linked (GlcNAc...) asparagine glycan. The helical transmembrane segment at 345 to 362 (GLWTTITIFISLFLLSVC) threads the bilayer. Residues 363-398 (YSASVTLFKVKWIFSSVVELKQTISPDYRNMIGQGA) are Cytoplasmic-facing.

It localises to the cell membrane. This Mus musculus (Mouse) protein is Immunoglobulin heavy constant gamma 2A.